We begin with the raw amino-acid sequence, 279 residues long: Protein PHOTOPERIODIC CONTROL OF HYPOCOTYL 1-LIKE (279 aa).

As to quaternary structure, interacts with light-activated phyB. Binds directly to PIF1 and COP1. Ubiquitinated by COP1 in darkness; this leads to proteasomal degradation. Mainly expressed in cotyledons, hypocotyls, leaves.

It is found in the nucleus. Functionally, together with PCH1, regulates growth and development adaptation to the ambient environment by controlling negatively phytochrome B (phyB) dark reversion, a temperature-dependent thermal relaxation process during which phyB reverts from the active to the inactive state. Contributes to red (R) light-triggered photomorphogenesis. Promotes various light responses such as seed germination, hypocotyl gravitropism and chlorophyll biosynthesis, via direct interaction with PIF1 and COP1. Prevents DNA-binding ability of PIF1 to negatively regulate the expressions of its target genes. Facilitates the physical interaction between phyB and PIF1 and the subsequent light-induced degradation of PIF1. The chain is Protein PHOTOPERIODIC CONTROL OF HYPOCOTYL 1-LIKE from Arabidopsis thaliana (Mouse-ear cress).